The following is a 115-amino-acid chain: NADH-ubiquinone oxidoreductase chain 3 (115 aa).

Helical transmembrane passes span 4–24 (FMAL…AFWL), 55–75 (FFLV…LLPL), and 87–107 (MMLT…YEWV).

Belongs to the complex I subunit 3 family. In terms of assembly, core subunit of respiratory chain NADH dehydrogenase (Complex I) which is composed of 45 different subunits. Interacts with TMEM186. Interacts with TMEM242.

The protein localises to the mitochondrion inner membrane. It catalyses the reaction a ubiquinone + NADH + 5 H(+)(in) = a ubiquinol + NAD(+) + 4 H(+)(out). Its function is as follows. Core subunit of the mitochondrial membrane respiratory chain NADH dehydrogenase (Complex I) which catalyzes electron transfer from NADH through the respiratory chain, using ubiquinone as an electron acceptor. Essential for the catalytic activity of complex I. In Osgoodomys banderanus (Michoacan deer mouse), this protein is NADH-ubiquinone oxidoreductase chain 3.